A 485-amino-acid polypeptide reads, in one-letter code: Protein nucleotidyltransferase YdiU (485 aa).

ATP is bound by residues G90, G92, R93, K113, D125, G126, R176, and R183. D252 serves as the catalytic Proton acceptor. Mg(2+) is bound by residues N253 and D262. An ATP-binding site is contributed by D262.

The protein belongs to the SELO family. Mg(2+) is required as a cofactor. It depends on Mn(2+) as a cofactor.

It carries out the reaction L-seryl-[protein] + ATP = 3-O-(5'-adenylyl)-L-seryl-[protein] + diphosphate. The catalysed reaction is L-threonyl-[protein] + ATP = 3-O-(5'-adenylyl)-L-threonyl-[protein] + diphosphate. It catalyses the reaction L-tyrosyl-[protein] + ATP = O-(5'-adenylyl)-L-tyrosyl-[protein] + diphosphate. The enzyme catalyses L-histidyl-[protein] + UTP = N(tele)-(5'-uridylyl)-L-histidyl-[protein] + diphosphate. It carries out the reaction L-seryl-[protein] + UTP = O-(5'-uridylyl)-L-seryl-[protein] + diphosphate. The catalysed reaction is L-tyrosyl-[protein] + UTP = O-(5'-uridylyl)-L-tyrosyl-[protein] + diphosphate. Its function is as follows. Nucleotidyltransferase involved in the post-translational modification of proteins. It can catalyze the addition of adenosine monophosphate (AMP) or uridine monophosphate (UMP) to a protein, resulting in modifications known as AMPylation and UMPylation. The protein is Protein nucleotidyltransferase YdiU of Vibrio atlanticus (strain LGP32) (Vibrio splendidus (strain Mel32)).